A 180-amino-acid polypeptide reads, in one-letter code: Putative manganese efflux pump MntP (180 aa).

6 helical membrane-spanning segments follow: residues 1-21 (MLSV…ISIT), 34-54 (ILWY…IGYV), 63-83 (ISTY…LNMI), 103-123 (VTLL…TFAI), 129-149 (VIPC…GIFI), and 160-180 (KFQI…LLGF).

It belongs to the MntP (TC 9.B.29) family.

The protein resides in the cell membrane. In terms of biological role, probably functions as a manganese efflux pump. The chain is Putative manganese efflux pump MntP from Methanosphaera stadtmanae (strain ATCC 43021 / DSM 3091 / JCM 11832 / MCB-3).